A 417-amino-acid chain; its full sequence is uncharacterized protein (417 aa).

The tract at residues Met1 to Pro24 is disordered. 4 helical membrane passes run Val54 to Ala74, Leu79 to Ile99, Ala117 to Val137, and Met143 to Met163. Basic and acidic residues predominate over residues Asp211–Asp228. 2 disordered regions span residues Asp211–Asp283 and Ile308–Lys417. Residues Ser312–Thr322 are compositionally biased toward polar residues. Over residues Glu336–Arg347 the composition is skewed to low complexity. Residues Ser391–Phe401 show a composition bias toward polar residues.

This sequence belongs to the chlamydial CPn_0443/CT_005/TC_0273 family.

The protein localises to the cell membrane. This is an uncharacterized protein from Chlamydia pneumoniae (Chlamydophila pneumoniae).